A 568-amino-acid polypeptide reads, in one-letter code: 2-succinyl-5-enolpyruvyl-6-hydroxy-3-cyclohexene-1-carboxylate synthase (568 aa).

Belongs to the TPP enzyme family. MenD subfamily. In terms of assembly, homodimer. Mg(2+) serves as cofactor. The cofactor is Mn(2+). Thiamine diphosphate is required as a cofactor.

The catalysed reaction is isochorismate + 2-oxoglutarate + H(+) = 5-enolpyruvoyl-6-hydroxy-2-succinyl-cyclohex-3-ene-1-carboxylate + CO2. It functions in the pathway quinol/quinone metabolism; 1,4-dihydroxy-2-naphthoate biosynthesis; 1,4-dihydroxy-2-naphthoate from chorismate: step 2/7. The protein operates within quinol/quinone metabolism; menaquinone biosynthesis. Catalyzes the thiamine diphosphate-dependent decarboxylation of 2-oxoglutarate and the subsequent addition of the resulting succinic semialdehyde-thiamine pyrophosphate anion to isochorismate to yield 2-succinyl-5-enolpyruvyl-6-hydroxy-3-cyclohexene-1-carboxylate (SEPHCHC). This chain is 2-succinyl-5-enolpyruvyl-6-hydroxy-3-cyclohexene-1-carboxylate synthase, found in Haemophilus influenzae (strain 86-028NP).